The following is a 274-amino-acid chain: Penicillin-insensitive murein endopeptidase (274 aa).

The first 19 residues, 1–19, serve as a signal peptide directing secretion; the sequence is MNKTAIALLALLASSASLA. Cystine bridges form between Cys44–Cys265, Cys187–Cys235, and Cys216–Cys223. His110, His113, Asp120, Asp147, His150, and His211 together coordinate Zn(2+). The disordered stretch occupies residues 227–274; it reads PLPPPGDGCGAELQSWFEPPKPGTTKPEKKTPPPLPPSCQALLDEHVI.

Belongs to the peptidase M74 family. As to quaternary structure, dimer. It depends on Zn(2+) as a cofactor.

Its subcellular location is the periplasm. Murein endopeptidase that cleaves the D-alanyl-meso-2,6-diamino-pimelyl amide bond that connects peptidoglycan strands. Likely plays a role in the removal of murein from the sacculus. This chain is Penicillin-insensitive murein endopeptidase, found in Escherichia coli (strain ATCC 8739 / DSM 1576 / NBRC 3972 / NCIMB 8545 / WDCM 00012 / Crooks).